A 167-amino-acid polypeptide reads, in one-letter code: Transmembrane protein 229B (167 aa).

At 1–14 (MAAAEPLTAFSRWY) the chain is on the cytoplasmic side. The helical transmembrane segment at 15 to 35 (LYAIHGYFCEVMFTAAWEFVV) threads the bilayer. Residues 36–40 (NFNWK) lie on the Extracellular side of the membrane. A helical membrane pass occupies residues 41–61 (FPGVTSVWALFIYGTSILIVE). Residues 62-72 (KMYLYLKDKCH) are Cytoplasmic-facing. The helical transmembrane segment at 73–93 (ILVRCFIYTLWTYLWEFTTGL) threads the bilayer. Topologically, residues 94-109 (ILRQFNACPWDYSQFD) are extracellular. The helical transmembrane segment at 110 to 130 (FDFMGLITLEYAIPWFCASFI) threads the bilayer. The Cytoplasmic portion of the chain corresponds to 131–167 (MEQLVIRNTLRLRFDETAEPGAPTVPVALANGHVKTD).

The protein belongs to the TMEM229 family.

Its subcellular location is the membrane. This is Transmembrane protein 229B (TMEM229B) from Gallus gallus (Chicken).